Reading from the N-terminus, the 478-residue chain is NAD(+) hydrolase ThsA (478 aa).

Residues 1 to 287 (MDKKVLIKRF…SIRKKYLRKT (287 aa)) enclose the Deacetylase sirtuin-type domain. NAD(+) contacts are provided by Ala-19, Asp-110, and His-148. The Proton acceptor role is filled by His-148. The segment at 288–478 (IFISGSAVDY…VSLINSIQED (191 aa)) is SLOG (STALD) domain. 3'cADPR-binding residues include Gly-292, Ser-293, Leu-330, Arg-373, Lys-390, Gly-401, and Glu-405.

The protein belongs to the soluble Thoeris ThsA family. Homotetramer in solution.

The catalysed reaction is NAD(+) + H2O = ADP-D-ribose + nicotinamide + H(+). Its activity is regulated as follows. Activated by 3'cADPR. Functionally, NAD(+) hydrolyzing component (NADase) of the Thoeris antiviral defense system, composed of ThsA and ThsB (maybe AS248_15445). Activated by 3' cyclic ADP-D-ribose (3'cADPR) but not its isomers 2'cADPR, cADPR and very weakly by ADPR; binds 3'cADPR better than 2'cADPR. Upon activation binds and hydrolyzes NAD(+), leading to cell death and inhibition of phage replication. This Enterococcus faecium (Streptococcus faecium) protein is NAD(+) hydrolase ThsA.